The primary structure comprises 445 residues: Gamma-glutamyl phosphate reductase (445 aa).

This sequence belongs to the gamma-glutamyl phosphate reductase family.

The protein resides in the cytoplasm. It carries out the reaction L-glutamate 5-semialdehyde + phosphate + NADP(+) = L-glutamyl 5-phosphate + NADPH + H(+). It functions in the pathway amino-acid biosynthesis; L-proline biosynthesis; L-glutamate 5-semialdehyde from L-glutamate: step 2/2. Catalyzes the NADPH-dependent reduction of L-glutamate 5-phosphate into L-glutamate 5-semialdehyde and phosphate. The product spontaneously undergoes cyclization to form 1-pyrroline-5-carboxylate. The chain is Gamma-glutamyl phosphate reductase from Synechococcus sp. (strain RCC307).